Consider the following 276-residue polypeptide: NADH-cytochrome b5 reductase 2 (276 aa).

Residues 15-127 (EAKYPLPLIE…RGPTGRLFYN (113 aa)) form the FAD-binding FR-type domain. An N6-acetyllysine modification is found at Lys17. Tyr18 is modified (phosphotyrosine). Residues 107-137 (ENMK…IKAN) and 146-181 (LVHH…RMSL) contribute to the FAD site.

The protein belongs to the flavoprotein pyridine nucleotide cytochrome reductase family. FAD is required as a cofactor.

It catalyses the reaction 2 Fe(III)-[cytochrome b5] + NADH = 2 Fe(II)-[cytochrome b5] + NAD(+) + H(+). Functionally, NADH-cytochrome b5 reductases are involved in desaturation and elongation of fatty acids, cholesterol biosynthesis, drug metabolism, and, in erythrocyte, methemoglobin reduction. Responsible for NADH-dependent lucigenin chemiluminescence in spermatozoa by reducing both lucigenin and 2-[4-iodophenyl]-3-[4-nitrophenyl]-5-[2,4-disulfophenyl]-2H tetrazolium monosodium salt (WST-1). The protein is NADH-cytochrome b5 reductase 2 (Cyb5r2) of Mus musculus (Mouse).